Consider the following 503-residue polypeptide: Glycerol kinase (503 aa).

Position 14 (T14) interacts with ADP. Residues T14, T15, and S16 each coordinate ATP. Sn-glycerol 3-phosphate is bound at residue T14. R18 contacts ADP. R84, E85, Y136, and D246 together coordinate sn-glycerol 3-phosphate. Residues R84, E85, Y136, D246, and Q247 each contribute to the glycerol site. 2 residues coordinate ADP: T268 and G311. Residues T268, G311, Q315, and G412 each coordinate ATP. The ADP site is built by G412 and N416.

Belongs to the FGGY kinase family.

The catalysed reaction is glycerol + ATP = sn-glycerol 3-phosphate + ADP + H(+). It functions in the pathway polyol metabolism; glycerol degradation via glycerol kinase pathway; sn-glycerol 3-phosphate from glycerol: step 1/1. Inhibited by fructose 1,6-bisphosphate (FBP). Functionally, key enzyme in the regulation of glycerol uptake and metabolism. Catalyzes the phosphorylation of glycerol to yield sn-glycerol 3-phosphate. The chain is Glycerol kinase from Haemophilus influenzae (strain 86-028NP).